Consider the following 874-residue polypeptide: Translation initiation factor IF-2 (874 aa).

The tract at residues 1 to 289 (MKIKNAQLTK…KHYDEHSVQR (289 aa)) is disordered. Positions 31-48 (SSSEKPTTKVPEKVAKEK) are enriched in basic and acidic residues. The span at 81 to 104 (RSSFASEDSTIPSPVSVDTESTAF) shows a compositional bias: polar residues. A compositionally biased stretch (low complexity) spans 105–118 (SPPVVEEVVSPLES). Composition is skewed to basic and acidic residues over residues 144-158 (PPKK…KEPP) and 186-198 (PKKE…KERT). Positions 199–211 (GTVQTKPQQSSEV) are enriched in polar residues. Positions 228-260 (YRRDTSKRPGSDFRDRSKKDDSPKAFTGRDRYG) are enriched in basic and acidic residues. The segment covering 271 to 280 (RKKRVQKTKK) has biased composition (basic residues). Residues 380–549 (IRPPIVAFMG…ALQAEVLELK (170 aa)) enclose the tr-type G domain. Residues 389–396 (GHVDHGKT) form a G1 region. Position 389 to 396 (389 to 396 (GHVDHGKT)) interacts with GTP. The segment at 414–418 (AITQH) is G2. Positions 435–438 (DTPG) are G3. GTP contacts are provided by residues 435 to 439 (DTPGH) and 489 to 492 (NKCD). Residues 489-492 (NKCD) are G4. The G5 stretch occupies residues 525–527 (SAK).

The protein belongs to the TRAFAC class translation factor GTPase superfamily. Classic translation factor GTPase family. IF-2 subfamily.

Its subcellular location is the cytoplasm. Its function is as follows. One of the essential components for the initiation of protein synthesis. Protects formylmethionyl-tRNA from spontaneous hydrolysis and promotes its binding to the 30S ribosomal subunits. Also involved in the hydrolysis of GTP during the formation of the 70S ribosomal complex. The sequence is that of Translation initiation factor IF-2 from Chlamydia abortus (strain DSM 27085 / S26/3) (Chlamydophila abortus).